A 183-amino-acid polypeptide reads, in one-letter code: Mast cell-expressed membrane protein 1 (183 aa).

A disordered region spans residues 1–26; the sequence is MHASASQDKNRRKPGHDEGAHNPDYE. Over 1–70 the chain is Cytoplasmic; the sequence is MHASASQDKN…PPWLYRTIMM (70 aa). A compositionally biased stretch (basic and acidic residues) spans 15 to 24; sequence GHDEGAHNPD. Residues 71-91 form a helical; Signal-anchor for type II membrane protein membrane-spanning segment; the sequence is LYVLLALVFLSCIVLSALVLV. The Extracellular portion of the chain corresponds to 92 to 183; it reads KNSEMSKELW…EKKAQPQPST (92 aa). N109 carries N-linked (GlcNAc...) asparagine glycosylation.

The protein resides in the membrane. The sequence is that of Mast cell-expressed membrane protein 1 from Mus musculus (Mouse).